Consider the following 263-residue polypeptide: LIM and SH3 domain protein 1 (263 aa).

Met-1 carries the N-acetylmethionine modification. One can recognise an LIM zinc-binding domain in the interval 5–56 (CARCGKIVYPTEKVNCLDKYWHKACFHCETCKMTLNMKNYKGYEKKPYCNAH). Lys-42 is modified (N6-acetyllysine). 2 Nebulin repeats span residues 61–95 (SFTM…KNKG) and 97–131 (GFSV…KSRM). Residue Thr-68 is modified to Phosphothreonine. Position 75 is an N6-methyllysine (Lys-75). At Ser-99 the chain carries Phosphoserine. Thr-104 carries the post-translational modification Phosphothreonine. Lys-112 is subject to N6-succinyllysine. A phosphoserine mark is found at Ser-118 and Ser-134. The segment at 123 to 207 (HEEFEKSRMG…QRSAPGGGGK (85 aa)) is disordered. Residues 148–162 (DSSSYRRPTEQQQPQ) show a composition bias toward polar residues. Thr-156 is modified (phosphothreonine; by PKA). One can recognise an SH3 domain in the interval 204 to 263 (GGGKRYRAVYDYSAADEDEVSFQDGDTIVNVQQIDDGWMYGTVERTGDTGMLPANYVEAI).

As to quaternary structure, interacts with F-actin. Interacts with KBTBD10. Interacts with ANKRD54.

It localises to the cytoplasm. The protein localises to the cell cortex. The protein resides in the cytoskeleton. In terms of biological role, plays an important role in the regulation of dynamic actin-based, cytoskeletal activities. Agonist-dependent changes in LASP1 phosphorylation may also serve to regulate actin-associated ion transport activities, not only in the parietal cell but also in certain other F-actin-rich secretory epithelial cell types. This Mus musculus (Mouse) protein is LIM and SH3 domain protein 1 (Lasp1).